The primary structure comprises 506 residues: MVSSTTPSSGEYLLEMSGINKSFPGVKALDNVNLKVRPHSIHALMGENGAGKSTLLKCLFGIYQKDSGTILFQGKEIDFHSAKEALENGISMVHQELNLVLQRSVMDNMWLGRYPTKGMFVDQDKMYRETKAIFDELDIDIDPRARVGTLSVSQMQMIEIAKAFSYNAKIVIMDEPTSSLTEKEVNHLFTIIRKLKERGCGIVYISHKMEEIFQLCDEVTVLRDGQWIATEPLAGLTMDKIIAMMVGRSLNQRFPDKENKPGEVILEVRNLTSLRQPSIRDVSFDLHKGEILGIAGLVGAKRTDIVETLFGIREKSAGTITLHGKKINNHNANEAINHGFALVTEERRSTGIYAYLDIGFNSLISNIRNYKNKVGLLDNSRMKSDTQWVIDSMRVKTPGHRTQIGSLSGGNQQKVIIGRWLLTQPEILMLDEPTRGIDVGAKFEIYQLIAELAKKGKGIIIISSEMPELLGITDRILVMSNGLVSGIVDTKTTTQSEILRLASLHL.

2 ABC transporter domains span residues 14 to 249 (LEMS…VGRS) and 264 to 506 (VILE…SLHL). 46 to 53 (GENGAGKS) is a binding site for ATP.

Belongs to the ABC transporter superfamily. Galactose/methyl galactoside importer (TC 3.A.1.2.3) family. As to quaternary structure, the complex is composed of one ATP-binding protein (MglA), two transmembrane proteins (MglC) and a solute-binding protein (MglB).

Its subcellular location is the cell inner membrane. It catalyses the reaction D-galactose(out) + ATP + H2O = D-galactose(in) + ADP + phosphate + H(+). The catalysed reaction is methyl beta-D-galactoside(out) + ATP + H2O = methyl beta-D-galactoside(in) + ADP + phosphate + H(+). In terms of biological role, part of the ABC transporter complex MglABC involved in galactose/methyl galactoside import. Responsible for energy coupling to the transport system. The protein is Galactose/methyl galactoside import ATP-binding protein MglA of Escherichia coli O6:K15:H31 (strain 536 / UPEC).